The sequence spans 379 residues: Putative acetyl-CoA C-acetyltransferase VraB (379 aa).

C86 functions as the Acyl-thioester intermediate in the catalytic mechanism. Catalysis depends on H338, which acts as the Proton acceptor.

This sequence belongs to the thiolase-like superfamily. Thiolase family.

The chain is Putative acetyl-CoA C-acetyltransferase VraB (vraB) from Staphylococcus aureus (strain COL).